A 214-amino-acid polypeptide reads, in one-letter code: Probable transaldolase (214 aa).

The active-site Schiff-base intermediate with substrate is the K83.

Belongs to the transaldolase family. Type 3B subfamily.

The protein localises to the cytoplasm. It catalyses the reaction D-sedoheptulose 7-phosphate + D-glyceraldehyde 3-phosphate = D-erythrose 4-phosphate + beta-D-fructose 6-phosphate. It participates in carbohydrate degradation; pentose phosphate pathway; D-glyceraldehyde 3-phosphate and beta-D-fructose 6-phosphate from D-ribose 5-phosphate and D-xylulose 5-phosphate (non-oxidative stage): step 2/3. Functionally, transaldolase is important for the balance of metabolites in the pentose-phosphate pathway. The chain is Probable transaldolase from Streptococcus equi subsp. zooepidemicus (strain MGCS10565).